Here is a 20-residue protein sequence, read N- to C-terminus: Unknown protein NF045 from 2D-PAGE (20 aa).

The protein is Unknown protein NF045 from 2D-PAGE of Naegleria fowleri (Brain eating amoeba).